The chain runs to 559 residues: MSTAVNVPSAVRPADKRPIASFHPSPWGDYFLKYVPCDQVTQAKMEDEVKKVEEDVKKELRKLAKAVGKPLELLNFIDVVERLGVGYRLEQEIEDLVQAIFDNDKFGVDEFDLYHTSLWFRLLRQHGFHVSCDVFGKFKGRNGRFKDSLASDVKGILGLYEASHVRTHGDDTLDEALVFTTTHLKAVVTNQPNHPLVPQVTHALMQPYHKGMPRLESRHFIAFYEKDPYHDKTLLKFGKLDFNLVQALHKKELKDLSRWWKDLDMHAKMPFPSRDRVPEGYFWTLGPFYEPQFALCRKFFLQVFKVTSIVDDIYDAYGTIDELTAFTKAAERWDRSCLDELPEYMKVSYASLIDTFEEFERDLAPQGRSWSVKYAREEMIQMCRVYYQEAKWCHEKYSPTCDEYLEKASIVSFGYNLGTVVCFLGMGDVATKEAFEWARGNPKVVRAAGIIGRLMDDIGSHHFEQGRDHVPSAVECYIRQHGVDEVTAQRELGKRVESSWKDINEMMLKPYMMPKPLLTRILNECRIVDVIYKGEDSYTFSNTTMKKNISHILTDPIPI.

Residues Asp-311, Asp-315, Asp-456, Ser-460, and Glu-464 each contribute to the Mg(2+) site. The DDXXD motif signature appears at 311-315; the sequence is DDIYD.

It belongs to the terpene synthase family. Mg(2+) is required as a cofactor.

It catalyses the reaction (2E,6E)-farnesyl diphosphate + H2O = (5S,9S,10S)-drim-7-en-11-ol + diphosphate. It participates in secondary metabolite biosynthesis; terpenoid biosynthesis. In terms of biological role, catalyzes the conversion of (2E,6E)-farnesyl diphosphate (FPP) into drimenol, a precursor of the sesquiterpenoid polygodial. Polygodial has been shown to be an antifeedant for a number of herbivorous insects. The chain is (-)-drimenol synthase from Persicaria hydropiper (Marshpepper knotweed).